A 732-amino-acid polypeptide reads, in one-letter code: 1,4-alpha-glucan branching enzyme GlgB 2 (732 aa).

D413 serves as the catalytic Nucleophile. Residue E466 is the Proton donor of the active site.

The protein belongs to the glycosyl hydrolase 13 family. GlgB subfamily. As to quaternary structure, monomer.

The catalysed reaction is Transfers a segment of a (1-&gt;4)-alpha-D-glucan chain to a primary hydroxy group in a similar glucan chain.. It participates in glycan biosynthesis; glycogen biosynthesis. Catalyzes the formation of the alpha-1,6-glucosidic linkages in glycogen by scission of a 1,4-alpha-linked oligosaccharide from growing alpha-1,4-glucan chains and the subsequent attachment of the oligosaccharide to the alpha-1,6 position. This is 1,4-alpha-glucan branching enzyme GlgB 2 from Rhizobium etli (strain ATCC 51251 / DSM 11541 / JCM 21823 / NBRC 15573 / CFN 42).